The chain runs to 238 residues: Uridylate kinase (238 aa).

12 to 15 (KLSG) is a binding site for ATP. Gly-54 is a UMP binding site. ATP is bound by residues Gly-55 and Arg-59. UMP-binding positions include Asp-74 and 135–142 (TGNPYFTT). Residues Thr-162, Tyr-168, and Asp-171 each coordinate ATP.

This sequence belongs to the UMP kinase family. In terms of assembly, homohexamer.

The protein localises to the cytoplasm. It catalyses the reaction UMP + ATP = UDP + ADP. It participates in pyrimidine metabolism; CTP biosynthesis via de novo pathway; UDP from UMP (UMPK route): step 1/1. With respect to regulation, inhibited by UTP. Catalyzes the reversible phosphorylation of UMP to UDP. The protein is Uridylate kinase of Lawsonia intracellularis (strain PHE/MN1-00).